The chain runs to 44 residues: Mu-conotoxin-like Cal 12.1.1e (44 aa).

Cystine bridges form between C3–C16, C11–C28, C18–C33, and C27–C38. Residue W17 is modified to 6'-bromotryptophan. Position 23 is a 4-hydroxyproline (P23). W36 and W37 each carry 6'-bromotryptophan. P39 is modified (4-hydroxyproline). W43 carries the 6'-bromotryptophan modification.

In terms of tissue distribution, expressed by the venom duct.

It is found in the secreted. In terms of biological role, mu-conotoxins block voltage-gated sodium channels. This toxin reversibly blocks voltage-gated sodium channel in cephalopods, with no alteration in the voltage dependence of sodium conductance or on the kinetics of inactivation. This chain is Mu-conotoxin-like Cal 12.1.1e, found in Californiconus californicus (California cone).